Here is a 334-residue protein sequence, read N- to C-terminus: Eukaryotic translation initiation factor 3 subunit H (334 aa).

Positions 20-152 constitute an MPN domain; the sequence is VQCDGLAAMK…LKAYRLTPQA (133 aa).

Belongs to the eIF-3 subunit H family. Component of the eukaryotic translation initiation factor 3 (eIF-3) complex.

The protein resides in the cytoplasm. Its function is as follows. Component of the eukaryotic translation initiation factor 3 (eIF-3) complex, which is involved in protein synthesis of a specialized repertoire of mRNAs and, together with other initiation factors, stimulates binding of mRNA and methionyl-tRNAi to the 40S ribosome. The eIF-3 complex specifically targets and initiates translation of a subset of mRNAs involved in cell proliferation. The polypeptide is Eukaryotic translation initiation factor 3 subunit H (Anopheles gambiae (African malaria mosquito)).